A 277-amino-acid polypeptide reads, in one-letter code: Large ribosomal subunit protein uL2 (277 aa).

Disordered regions lie at residues 24 to 55 (ITTSTPEKSLLRPLKKKAGRNNQGKLTVRHHG) and 221 to 277 (RGSV…RKKK).

The protein belongs to the universal ribosomal protein uL2 family. In terms of assembly, part of the 50S ribosomal subunit. Forms a bridge to the 30S subunit in the 70S ribosome.

In terms of biological role, one of the primary rRNA binding proteins. Required for association of the 30S and 50S subunits to form the 70S ribosome, for tRNA binding and peptide bond formation. It has been suggested to have peptidyltransferase activity; this is somewhat controversial. Makes several contacts with the 16S rRNA in the 70S ribosome. The chain is Large ribosomal subunit protein uL2 from Listeria welshimeri serovar 6b (strain ATCC 35897 / DSM 20650 / CCUG 15529 / CIP 8149 / NCTC 11857 / SLCC 5334 / V8).